Reading from the N-terminus, the 632-residue chain is Probable potassium transport system protein Kup 1 (632 aa).

The next 12 membrane-spanning stretches (helical) occupy residues 17-37, 60-80, 106-126, 146-166, 175-195, 210-230, 254-274, 292-312, 344-364, 370-390, 401-421, and 426-446; these read LFYLALGSVGVVYGDIGTSPL, LISLMIWALTIIVTIKYVLFL, TAILMLLGLMGAALFLGDAMI, LADYIVPISVVILALLFVVQS, FFGPITAVWFLVMAAAGISHI, AVAFLLHEGFYGIVVLGAVFL, WFLLVFPALTLNYLGQGALVL, ALLPVVILATAATIIASQAVI, IFVPSVNAVLFIGVIFLVLGF, LATAYGISVTGAMVVTSIMAF, LPVAVIALAPLVVLEMIFLGA, and IHDGGYIPIMIATAFTVVMWT.

This sequence belongs to the HAK/KUP transporter (TC 2.A.72) family.

The protein resides in the cell inner membrane. It catalyses the reaction K(+)(in) + H(+)(in) = K(+)(out) + H(+)(out). Transport of potassium into the cell. Likely operates as a K(+):H(+) symporter. In Rhizobium johnstonii (strain DSM 114642 / LMG 32736 / 3841) (Rhizobium leguminosarum bv. viciae), this protein is Probable potassium transport system protein Kup 1.